The following is a 1322-amino-acid chain: Mediator of RNA polymerase II transcription subunit 12 (1322 aa).

A disordered region spans residues 1-21; that stretch reads MSPSKYLLTPPEELHPLTDSN.

The protein belongs to the Mediator complex subunit 12 family. In terms of assembly, component of the SRB8-11 complex, which itself associates with the Mediator complex.

The protein resides in the nucleus. Functionally, component of the SRB8-11 complex. The SRB8-11 complex is a regulatory module of the Mediator complex which is itself involved in regulation of basal and activated RNA polymerase II-dependent transcription. The SRB8-11 complex may be involved in the transcriptional repression of a subset of genes regulated by Mediator. It may inhibit the association of the Mediator complex with RNA polymerase II to form the holoenzyme complex. In Kluyveromyces lactis (strain ATCC 8585 / CBS 2359 / DSM 70799 / NBRC 1267 / NRRL Y-1140 / WM37) (Yeast), this protein is Mediator of RNA polymerase II transcription subunit 12 (SRB8).